Reading from the N-terminus, the 89-residue chain is Small membrane A-kinase anchor protein (89 aa).

Residues 1-29 (MGCMKSKRRDPTQNSDSSEKVDGKPGKHG) are disordered. G2 is lipidated: N-myristoyl glycine. A compositionally biased stretch (basic and acidic residues) spans 17–29 (SSEKVDGKPGKHG).

It belongs to the small membrane AKAP family. Post-translationally, may be palmitoylated at Cys-3.

The protein localises to the cell membrane. In terms of biological role, binds to type I regulatory subunits of protein kinase A and may anchor/target them to the plasma membrane. In Danio rerio (Zebrafish), this protein is Small membrane A-kinase anchor protein.